The chain runs to 262 residues: Acyl-coenzyme A diphosphatase FITM2 (262 aa).

Topologically, residues 1–23 (MEHLERCEWLLRGTLVRAAVRRY) are cytoplasmic. A helical membrane pass occupies residues 24–44 (LPWALVASMLAGSLLKELSPL). At 45–57 (PESYLSNKRNVLN) the chain is on the lumenal side. Residues 58–78 (VYFVKVAWAWTFCLLLPFIAL) form a helical membrane-spanning segment. At 79–93 (TNYHLTGKAGLVLRR) the chain is on the cytoplasmic side. The helical transmembrane segment at 94 to 114 (LSTLLVGTAIWYICTSIFSNI) threads the bilayer. The Lumenal portion of the chain corresponds to 115–145 (EHYTGSCYQSPALEGVRKEHQSKQQCHQEGG). A helical transmembrane segment spans residues 146–166 (FWHGFDISGHSFLLTFCALMI). The active site involves H155. Residues 167–190 (VEEMSVLHEVKTDRSHCLHTAITT) are Cytoplasmic-facing. The chain crosses the membrane as a helical span at residues 191 to 211 (LVVALGILTFIWVLMFLCTAV). Residues 212–218 (YFHNLSQ) are Lumenal-facing. H214 is a catalytic residue. Residues 219–239 (KVFGTLFGLLSWYGTYGFWYP) form a helical membrane-spanning segment. Topologically, residues 240–262 (KAFSPGLPPQSCSLNLKQDSYKK) are cytoplasmic.

It belongs to the FIT family. FIT2 subfamily. As to expression, widely expressed.

Its subcellular location is the endoplasmic reticulum membrane. It carries out the reaction an acyl-CoA + H2O = an acyl-4'-phosphopantetheine + adenosine 3',5'-bisphosphate + 2 H(+). The catalysed reaction is (9Z)-octadecenoyl-CoA + H2O = S-(9Z-octadecenoyl)-4'-phosphopantetheine + adenosine 3',5'-bisphosphate + 2 H(+). It catalyses the reaction (5Z,8Z,11Z,14Z)-eicosatetraenoyl-CoA + H2O = S-(5Z,8Z,11Z,14Z-eicosatetraenoyl)-4'-phosphopantetheine + adenosine 3',5'-bisphosphate + 2 H(+). The enzyme catalyses hexadecanoyl-CoA + H2O = S-hexadecanoyl-4'-phosphopantetheine + adenosine 3',5'-bisphosphate + 2 H(+). Its function is as follows. Fatty acyl-coenzyme A (CoA) diphosphatase that hydrolyzes fatty acyl-CoA to yield acyl-4'-phosphopantetheine and adenosine 3',5'-bisphosphate. Preferentially hydrolyzes unsaturated long-chain acyl-CoA substrates such as oleoyl-CoA/(9Z)-octadecenoyl-CoA and arachidonoyl-CoA/(5Z,8Z,11Z,14Z)-eicosatetraenoyl-CoA in the endoplasmic reticulum (ER) lumen. This catalytic activity is required for maintaining ER structure and for lipid droplets (LDs) biogenesis, which are lipid storage organelles involved in maintaining lipid and energy homeostasis. Directly binds to diacylglycerol (DAGs) and triacylglycerol, which is also important for LD biogenesis. May support directional budding of nacent LDs from the ER into the cytosol by reducing DAG levels at sites of LD formation. Plays a role in the regulation of cell morphology and cytoskeletal organization. This is Acyl-coenzyme A diphosphatase FITM2 from Homo sapiens (Human).